Reading from the N-terminus, the 501-residue chain is Spore development regulator VOSA (501 aa).

3 disordered regions span residues 26 to 55 (GQFG…GQEP), 67 to 88 (PQRA…IDPP), and 228 to 274 (AMTT…DTRG). Residues 35–50 (PPQAETQMSAQASAQA) are compositionally biased toward polar residues. The Velvet domain occupies 52 to 223 (GQEPEPDYKL…SDQGVRLRVR (172 aa)). 2 stretches are compositionally biased toward basic and acidic residues: residues 67 to 85 (PQRA…RKPI) and 237 to 252 (QHAE…DRKQ). Over residues 253–271 (TSAVSRHSSINENDSTPTD) the composition is skewed to polar residues. A Nuclear localization signal motif is present at residues 364–371 (MSSHHGYT). Disordered stretches follow at residues 378–455 (FAPH…QQTP) and 474–501 (PGQL…EPGA).

Belongs to the velvet family. VosA subfamily. As to quaternary structure, forms a heterodimeric complex with VELB; the formation of the VELB-VOSA complex is light-dependent.

The protein localises to the nucleus. Functionally, component of the VELB-VOSA heterodimeric complex that plays a dual role in activating genes associated with spore maturation and repressing certain development-associated genes. The complex binds DNA through the DNA-binding domain of VOSA that recognizes an 11-nucleotide consensus sequence 5'-CTGGCCGCGGC-3' consisting of two motifs in the promoters of key developmental regulatory genes. Appears dispensable for the development and pathogenicity. The protein is Spore development regulator VOSA of Pyricularia oryzae (strain 70-15 / ATCC MYA-4617 / FGSC 8958) (Rice blast fungus).